A 236-amino-acid chain; its full sequence is MAPDPWFSTYDSTCQIAQEIAEKIQQRNQYERKGEKAPKLTVTIRALLQNLKEKIALLKDLLLRAVSTHQITQLEGDRRQNLLDDLVTRERLLLASFKNEGAEPDLIRSSLMSEEAKRGAPNPWLFEEPEETRGLGFDEIRQQQQKIIQEQDAGLDALSSIISRQKQMGQEIGNELDEQNEIIDDLANLVENTDEKLRNETRRVNMVDRKSASCGMIMVILLLLVAIVVVAVWPTN.

The Cytoplasmic portion of the chain corresponds to 1 to 215 (MAPDPWFSTY…MVDRKSASCG (215 aa)). Positions 42-65 (VTIRALLQNLKEKIALLKDLLLRA) form a coiled coil. One can recognise a t-SNARE coiled-coil homology domain in the interval 145–207 (QKIIQEQDAG…RNETRRVNMV (63 aa)). At S160 the chain carries Phosphoserine. The helical; Anchor for type IV membrane protein transmembrane segment at 216–232 (MIMVILLLLVAIVVVAV) threads the bilayer. Over 233–236 (WPTN) the chain is Vesicular.

It belongs to the syntaxin family. As to quaternary structure, forms a SNARE complex with STX7, VTI1B and VAMP8 which functions in the homotypic fusion of late endosomes. Part of the SNARE core complex containing STX7, VAMP8 and VTI1B. Interacts with VAMP8. Interacts with HECTD3. Interacts with TPC1. Post-translationally, ubiquitinated by HECTD3. As to expression, highly expressed in heart. Also found in brain, kidney, liver, lung, placenta, skeletal muscle, spleen and pancreas.

It localises to the membrane. Functionally, vesicle trafficking protein that functions in the early secretory pathway, possibly by mediating retrograde transport from cis-Golgi membranes to the ER. This chain is Syntaxin-8 (STX8), found in Homo sapiens (Human).